The sequence spans 503 residues: Cytochrome P450 11B1, mitochondrial (503 aa).

The N-terminal 24 residues, 1–24 (MAIWAKAEAWLAGPWLALNRARTL), are a transit peptide targeting the mitochondrion. Residue Cys450 participates in heme binding.

Belongs to the cytochrome P450 family. It depends on heme as a cofactor.

The protein localises to the mitochondrion inner membrane. It catalyses the reaction a steroid + 2 reduced [adrenodoxin] + O2 + 2 H(+) = an 11beta-hydroxysteroid + 2 oxidized [adrenodoxin] + H2O. It carries out the reaction 11-deoxycortisol + 2 reduced [adrenodoxin] + O2 + 2 H(+) = cortisol + 2 oxidized [adrenodoxin] + H2O. The enzyme catalyses 21-hydroxyprogesterone + 2 reduced [adrenodoxin] + O2 + 2 H(+) = corticosterone + 2 oxidized [adrenodoxin] + H2O. The catalysed reaction is corticosterone + 2 reduced [adrenodoxin] + O2 + 2 H(+) = 18-hydroxycorticosterone + 2 oxidized [adrenodoxin] + H2O. It catalyses the reaction 18-hydroxycorticosterone + 2 reduced [adrenodoxin] + O2 + 2 H(+) = aldosterone + 2 oxidized [adrenodoxin] + 2 H2O. It carries out the reaction 21-hydroxyprogesterone + 2 reduced [adrenodoxin] + O2 + 2 H(+) = 19-hydroxy-11-deoxycorticosterone + 2 oxidized [adrenodoxin] + H2O. The enzyme catalyses 19-hydroxy-11-deoxycorticosterone + 2 reduced [adrenodoxin] + O2 + 2 H(+) = 19-oxo-11-deoxycorticosterone + 2 oxidized [adrenodoxin] + 2 H2O. Its pathway is steroid biosynthesis; glucocorticoid biosynthesis. The protein operates within steroid hormone biosynthesis. In terms of biological role, a cytochrome P450 monooxygenase that catalyzes the biosynthesis of aldosterone and other adrenal corticoids. Differing from other species (such as human, rat and mice), it is able to catalyze three sequential oxidative reactions of 11-deoxycorticosterone (21-hydroxyprogesterone), namely 11-beta hydroxylation, followed by two successive oxidations at C18 yielding 18-hydroxy and then 18-oxo intermediates, and ending with the formation of aldosterone. Steroid 11beta, 18- and 19-hydroxylase. Mechanistically, uses molecular oxygen inserting one oxygen atom into a substrate and reducing the second into a water molecule. Two electrons are provided by NADPH via a two-protein mitochondrial transfer system comprising flavoprotein FDXR (adrenodoxin/ferredoxin reductase) and nonheme iron-sulfur protein FDX1 or FDX2 (adrenodoxin/ferredoxin). In Sus scrofa (Pig), this protein is Cytochrome P450 11B1, mitochondrial (CYP11B1).